We begin with the raw amino-acid sequence, 58 residues long: Small ribosomal subunit protein bS21 (58 aa).

Residues 25–58 (SKSGTLQEYRKREHYEKPSVKRKKKSEAARKRKF) form a disordered region. Residues 32–43 (EYRKREHYEKPS) are compositionally biased toward basic and acidic residues. Residues 44-58 (VKRKKKSEAARKRKF) show a composition bias toward basic residues.

Belongs to the bacterial ribosomal protein bS21 family.

This chain is Small ribosomal subunit protein bS21, found in Oceanobacillus iheyensis (strain DSM 14371 / CIP 107618 / JCM 11309 / KCTC 3954 / HTE831).